A 292-amino-acid polypeptide reads, in one-letter code: Nucleotide-binding protein AZOSEA20610 (292 aa).

Glycine 8–serine 15 lines the ATP pocket. Aspartate 57 to serine 60 contributes to the GTP binding site.

This sequence belongs to the RapZ-like family.

Functionally, displays ATPase and GTPase activities. The chain is Nucleotide-binding protein AZOSEA20610 from Aromatoleum aromaticum (strain DSM 19018 / LMG 30748 / EbN1) (Azoarcus sp. (strain EbN1)).